The chain runs to 270 residues: ATP synthase subunit delta (270 aa).

This sequence belongs to the ATPase delta chain family. In terms of assembly, F-type ATPases have 2 components, F(1) - the catalytic core - and F(0) - the membrane proton channel. F(1) has five subunits: alpha(3), beta(3), gamma(1), delta(1), epsilon(1). F(0) has three main subunits: a(1), b(2) and c(10-14). The alpha and beta chains form an alternating ring which encloses part of the gamma chain. F(1) is attached to F(0) by a central stalk formed by the gamma and epsilon chains, while a peripheral stalk is formed by the delta and b chains.

Its subcellular location is the cell membrane. Its function is as follows. F(1)F(0) ATP synthase produces ATP from ADP in the presence of a proton or sodium gradient. F-type ATPases consist of two structural domains, F(1) containing the extramembraneous catalytic core and F(0) containing the membrane proton channel, linked together by a central stalk and a peripheral stalk. During catalysis, ATP synthesis in the catalytic domain of F(1) is coupled via a rotary mechanism of the central stalk subunits to proton translocation. This protein is part of the stalk that links CF(0) to CF(1). It either transmits conformational changes from CF(0) to CF(1) or is implicated in proton conduction. This is ATP synthase subunit delta from Kocuria rhizophila (strain ATCC 9341 / DSM 348 / NBRC 103217 / DC2201).